A 248-amino-acid chain; its full sequence is Proteasome subunit alpha type-7 (248 aa).

O-linked (GlcNAc) serine glycosylation is present at Ser130. At Tyr153 the chain carries Phosphotyrosine; by ABL1 and ABL2. Lys227 carries the N6-acetyllysine modification.

It belongs to the peptidase T1A family. The 26S proteasome consists of a 20S proteasome core and two 19S regulatory subunits. The 20S proteasome core is a barrel-shaped complex made of 28 subunits that are arranged in four stacked rings. The two outer rings are each formed by seven alpha subunits, and the two inner rings are formed by seven beta subunits. The proteolytic activity is exerted by three beta-subunits PSMB5, PSMB6 and PSMB7. PSMA7 interacts directly with the PSMG1-PSMG2 heterodimer which promotes 20S proteasome assembly. Interacts with HIF1A. Interacts with RAB7A. Interacts with PRKN. Interacts with ABL1 and ABL2. Interacts with EMAP2. Interacts with MAVS. Phosphorylation by ABL1 or ABL2 leads to an inhibition of proteasomal activity and cell cycle transition blocks. Detected in liver (at protein level).

It is found in the cytoplasm. Its subcellular location is the nucleus. In terms of biological role, component of the 20S core proteasome complex involved in the proteolytic degradation of most intracellular proteins. This complex plays numerous essential roles within the cell by associating with different regulatory particles. Associated with two 19S regulatory particles, forms the 26S proteasome and thus participates in the ATP-dependent degradation of ubiquitinated proteins. The 26S proteasome plays a key role in the maintenance of protein homeostasis by removing misfolded or damaged proteins that could impair cellular functions, and by removing proteins whose functions are no longer required. Associated with the PA200 or PA28, the 20S proteasome mediates ubiquitin-independent protein degradation. This type of proteolysis is required in several pathways including spermatogenesis (20S-PA200 complex) or generation of a subset of MHC class I-presented antigenic peptides (20S-PA28 complex). This chain is Proteasome subunit alpha type-7 (Psma7), found in Mus musculus (Mouse).